We begin with the raw amino-acid sequence, 399 residues long: Elongation factor Tu (399 aa).

Residues K10–V207 form the tr-type G domain. Residues G19–T26 form a G1 region. G19–T26 contacts GTP. T26 contacts Mg(2+). The segment at G60–N64 is G2. Positions D81–G84 are G3. Residues D81–H85 and N136–D139 contribute to the GTP site. The tract at residues N136–D139 is G4. Residues S174–L176 form a G5 region.

This sequence belongs to the TRAFAC class translation factor GTPase superfamily. Classic translation factor GTPase family. EF-Tu/EF-1A subfamily. In terms of assembly, monomer.

The protein localises to the cytoplasm. The catalysed reaction is GTP + H2O = GDP + phosphate + H(+). GTP hydrolase that promotes the GTP-dependent binding of aminoacyl-tRNA to the A-site of ribosomes during protein biosynthesis. In Pseudothermotoga lettingae (strain ATCC BAA-301 / DSM 14385 / NBRC 107922 / TMO) (Thermotoga lettingae), this protein is Elongation factor Tu.